The following is a 290-amino-acid chain: Arylamine N-acetyltransferase 2 (290 aa).

C68 serves as the catalytic Acyl-thioester intermediate. 2 residues coordinate CoA: S103 and G104. 106–107 lines the substrate pocket; the sequence is IH. Residues H107 and D122 contribute to the active site. Residue Y208 coordinates CoA.

This sequence belongs to the arylamine N-acetyltransferase family.

The protein resides in the cytoplasm. It catalyses the reaction an arylamine + acetyl-CoA = an N-acetylarylamine + CoA. It carries out the reaction an N-hydroxyarylamine + acetyl-CoA = an N-acetoxyarylamine + CoA. Functionally, catalyzes the N- or O-acetylation of various arylamine and heterocyclic amine substrates. Participates in the detoxification of a plethora of hydrazine and arylamine drugs. The protein is Arylamine N-acetyltransferase 2 (Nat2) of Rattus norvegicus (Rat).